An 82-amino-acid polypeptide reads, in one-letter code: Putative membrane protein insertion efficiency factor (82 aa).

The protein belongs to the UPF0161 family.

It is found in the cell inner membrane. Its function is as follows. Could be involved in insertion of integral membrane proteins into the membrane. The sequence is that of Putative membrane protein insertion efficiency factor from Rickettsia massiliae (strain Mtu5).